The chain runs to 66 residues: MKAAELRNLTNEELMNLLEEKKRTLMNLRFQNVLGQLNDHSQISKTKKDIARIKTILRERELGVRR.

Belongs to the universal ribosomal protein uL29 family.

In Thermosipho melanesiensis (strain DSM 12029 / CIP 104789 / BI429), this protein is Large ribosomal subunit protein uL29.